The chain runs to 213 residues: Probable GTP-binding protein EngB (213 aa).

The EngB-type G domain maps to 30-204; that stretch reads EGFEVAFAGR…YTVLAGWMEL (175 aa). GTP-binding positions include 38–45, 64–68, 82–85, 149–152, and 182–185; these read GRSNAGKS, GRTQL, DLPG, TKAD, and LFSA. Residues Ser-45 and Thr-66 each contribute to the Mg(2+) site.

This sequence belongs to the TRAFAC class TrmE-Era-EngA-EngB-Septin-like GTPase superfamily. EngB GTPase family. It depends on Mg(2+) as a cofactor.

In terms of biological role, necessary for normal cell division and for the maintenance of normal septation. This chain is Probable GTP-binding protein EngB, found in Pseudomonas fluorescens (strain ATCC BAA-477 / NRRL B-23932 / Pf-5).